A 163-amino-acid chain; its full sequence is Neurotrophin-3 (163 aa).

An N-terminal signal peptide occupies residues 1 to 3 (IQS). A propeptide spanning residues 4 to 119 (TSMDQGILTE…VLNRTSRRKR (116 aa)) is cleaved from the precursor. N-linked (GlcNAc...) asparagine glycosylation occurs at N112.

It belongs to the NGF-beta family.

The protein localises to the secreted. Functionally, seems to promote the survival of visceral and proprioceptive sensory neurons. The protein is Neurotrophin-3 (NTF3) of Eryx colubrinus colubrinus.